A 328-amino-acid polypeptide reads, in one-letter code: GMP reductase (328 aa).

C176 acts as the Thioimidate intermediate in catalysis. Position 205–228 (205–228) interacts with NADP(+); the sequence is IIADGGIRTHGDIAKSIRFGASMV.

This sequence belongs to the IMPDH/GMPR family. GuaC type 2 subfamily.

The enzyme catalyses IMP + NH4(+) + NADP(+) = GMP + NADPH + 2 H(+). Catalyzes the irreversible NADPH-dependent deamination of GMP to IMP. It functions in the conversion of nucleobase, nucleoside and nucleotide derivatives of G to A nucleotides, and in maintaining the intracellular balance of A and G nucleotides. The sequence is that of GMP reductase from Streptococcus pneumoniae (strain Hungary19A-6).